The sequence spans 130 residues: Small ribosomal subunit protein uS11 (130 aa).

This sequence belongs to the universal ribosomal protein uS11 family. Part of the 30S ribosomal subunit.

In terms of biological role, located on the platform of the 30S subunit. The polypeptide is Small ribosomal subunit protein uS11 (Thermoplasma acidophilum (strain ATCC 25905 / DSM 1728 / JCM 9062 / NBRC 15155 / AMRC-C165)).